A 440-amino-acid polypeptide reads, in one-letter code: Histidinol dehydrogenase (440 aa).

The NAD(+) site is built by Y133, Q194, and N217. 3 residues coordinate substrate: S240, Q262, and H265. Positions 262 and 265 each coordinate Zn(2+). Residues E330 and H331 each act as proton acceptor in the active site. The substrate site is built by H331, D364, E418, and H423. Zn(2+) is bound at residue D364. Residue H423 coordinates Zn(2+).

It belongs to the histidinol dehydrogenase family. Requires Zn(2+) as cofactor.

It catalyses the reaction L-histidinol + 2 NAD(+) + H2O = L-histidine + 2 NADH + 3 H(+). It functions in the pathway amino-acid biosynthesis; L-histidine biosynthesis; L-histidine from 5-phospho-alpha-D-ribose 1-diphosphate: step 9/9. Catalyzes the sequential NAD-dependent oxidations of L-histidinol to L-histidinaldehyde and then to L-histidine. This chain is Histidinol dehydrogenase, found in Nitrosospira multiformis (strain ATCC 25196 / NCIMB 11849 / C 71).